The following is an 89-amino-acid chain: Protein M7 (89 aa).

Positions 1–25 (MAAMKSLATAILVVLLLRRLPRGLS) are cleaved as a signal peptide. Intrachain disulfides connect Cys28-Cys65, Cys38-Cys54, Cys55-Cys80, and Cys67-Cys87.

Belongs to the A9/FIL1 family. As to expression, tapetum of anthers.

The protein resides in the secreted. The polypeptide is Protein M7 (M7) (Lilium henryi (Henry's lily)).